Reading from the N-terminus, the 232-residue chain is Protein shisa-3 (232 aa).

Residues 1–19 (MRLLGCFFLIFLTWGSARA) form the signal peptide. Residues 20–93 (QGEYCHGWLD…GVSAQPVYVP (74 aa)) lie on the Lumenal side of the membrane. A helical membrane pass occupies residues 94 to 114 (FLIVGSIFIAFIIVGSLVAVY). The Cytoplasmic portion of the chain corresponds to 115–232 (CCTCLRPKQT…NKSCPDFRQS (118 aa)). The disordered stretch occupies residues 146-185 (TSGNLRTPSRQSSTATSSTSTGGSVRRLSSSRADPGYLVS). A compositionally biased stretch (low complexity) spans 151 to 177 (RTPSRQSSTATSSTSTGGSVRRLSSSR).

This sequence belongs to the shisa family. In terms of assembly, interacts with fzd8 and fgfr1.

The protein localises to the endoplasmic reticulum membrane. Plays an essential role in the maturation of presomitic mesoderm cells by individual attenuation of both fgf and wnt signaling. Regulates head and somite developmen. Inhibits both wnt and fgf signaling through the regulation of protein maturation and cell surface transportation of their receptors within the endoplasmic reticulum. In Xenopus laevis (African clawed frog), this protein is Protein shisa-3 (shisa3).